A 183-amino-acid chain; its full sequence is uncharacterized protein (183 aa).

Residues 55 to 183 (PRAAVLLVDL…RSRRGSRPAR (129 aa)) form the GGDEF domain.

Might be involved in pSAM2 replication control. This is an uncharacterized protein from Streptomyces ambofaciens.